The following is a 261-amino-acid chain: MAETRIHPSAVVDPAAQVGEGCEIGPFCVIGPEVGLGRGVVLKSHVVVAGETLIGDETVVFPFASLGEVPQDLKFRGERTRLEIGARNRIREYVTMNPGTEGGGGVTRIGDDGLFMAGSHVAHDCQIGNRVILVNNASVAGHCVLEDDVIVGGLSGVHQFVRIGRGAMIGAVTMVTADVIPFGLVQGPRGHLDGLNLVGLKRRGASREEIHALRDMLAQLGQGSFRDTARHLAEAENGPMVREVLDFILGPSDRSFLAPHP.

It belongs to the transferase hexapeptide repeat family. LpxA subfamily. As to quaternary structure, homotrimer.

Its subcellular location is the cytoplasm. It carries out the reaction a (3R)-hydroxyacyl-[ACP] + UDP-N-acetyl-alpha-D-glucosamine = a UDP-3-O-[(3R)-3-hydroxyacyl]-N-acetyl-alpha-D-glucosamine + holo-[ACP]. It functions in the pathway glycolipid biosynthesis; lipid IV(A) biosynthesis; lipid IV(A) from (3R)-3-hydroxytetradecanoyl-[acyl-carrier-protein] and UDP-N-acetyl-alpha-D-glucosamine: step 1/6. Functionally, involved in the biosynthesis of lipid A, a phosphorylated glycolipid that anchors the lipopolysaccharide to the outer membrane of the cell. In Paracoccus denitrificans (strain Pd 1222), this protein is Acyl-[acyl-carrier-protein]--UDP-N-acetylglucosamine O-acyltransferase.